Consider the following 63-residue polypeptide: Large ribosomal subunit protein uL29 (63 aa).

Belongs to the universal ribosomal protein uL29 family.

The sequence is that of Large ribosomal subunit protein uL29 (rpmC) from Buchnera aphidicola subsp. Acyrthosiphon kondoi (Acyrthosiphon kondoi symbiotic bacterium).